The primary structure comprises 1033 residues: Tyrosine-protein kinase-like otk (1033 aa).

An N-terminal signal peptide occupies residues 1 to 22 (MTARMISICGLVMALMMASVLA). At 23–581 (SSSRFQRVPQ…GGDGFLVTRA (559 aa)) the chain is on the extracellular side. Ig-like C2-type domains follow at residues 25–114 (SRFQ…AKLS), 113–199 (LSVI…RVMS), 251–365 (PEDL…APIN), 368–463 (PGIL…VAIN), and 468–558 (PKFS…VQLV). A glycan (N-linked (GlcNAc...) asparagine) is linked at N39. 4 disulfides stabilise this stretch: C46-C95, C137-C188, C276-C354, and C399-C447. N-linked (GlcNAc...) asparagine glycans are attached at residues N336, N417, N429, N444, N457, N512, and N524. Cysteines 490 and 542 form a disulfide. The helical transmembrane segment at 582–602 (VLITMTVALAYIVLVVGLMLW) threads the bilayer. Residues 603 to 1033 (CRYRRQARKA…LSKAMQSAEK (431 aa)) lie on the Cytoplasmic side of the membrane. 2 disordered regions span residues 617 to 679 (LSTK…KKSA) and 718 to 760 (SPSD…KTSM). The segment covering 655–673 (KSSGDAQKSDDTACSQQSR) has biased composition (polar residues). S678 is modified (phosphoserine). The Protein kinase; inactive domain maps to 692-1028 (LSELIQIGRG…QLGAALSKAM (337 aa)). Positions 720–731 (SDKDADTEKQHS) are enriched in basic and acidic residues.

It belongs to the protein kinase superfamily. Tyr protein kinase family. Insulin receptor subfamily. Interacts with plexA; component of a receptor complex that mediates the repulsive signaling in response to Semaphorin ligands. As to expression, dynamically expressed during embryogenesis in several areas of the developing nervous system, including neurons and fasciculating axons. Expression in stage 7 embryos is seen in the anterior midgut primordia, cephalic furrow and along the germinal band. At stage 11, expression is in 15 stripes over the trunk region, and in the anterior and posterior midgut primordia. Stage 12 shows expression in the developing nervous system, procephalic lobe and maxillar bud. Stage 13 shows expression in the ventral cord, maxillar segment and in three regions of the gut. At stage 16 expression is preferentially detected throughout the nervous system, including the neuromers in the ventral cord and the supraesophageal ganglion (at protein level). In larva, expression is seen in developing R cells and is localized predominantly to R1-R6 growth cones.

It localises to the cell membrane. Functionally, acts as a calcium-dependent, homophilic cell adhesion molecule that regulates neural recognition during the development of the nervous system. Component of the repulsive Plexin signaling response to regulate motor axon guidance at the embryonic stage. Also component of a receptor complex that is required in the adult visual system to innervate the lamina layer; specific targeting of R1-R6 axons. In Drosophila melanogaster (Fruit fly), this protein is Tyrosine-protein kinase-like otk.